Consider the following 295-residue polypeptide: Pantothenate synthetase (295 aa).

29–36 (MGALHSGH) provides a ligand contact to ATP. The active-site Proton donor is the His36. Residue Gln60 participates in (R)-pantoate binding. Residue Gln60 participates in beta-alanine binding. Residue 158 to 161 (GQKD) participates in ATP binding. Gln164 contributes to the (R)-pantoate binding site. Residues Val187 and 195–198 (LSSR) each bind ATP.

The protein belongs to the pantothenate synthetase family. As to quaternary structure, homodimer.

It localises to the cytoplasm. The enzyme catalyses (R)-pantoate + beta-alanine + ATP = (R)-pantothenate + AMP + diphosphate + H(+). It functions in the pathway cofactor biosynthesis; (R)-pantothenate biosynthesis; (R)-pantothenate from (R)-pantoate and beta-alanine: step 1/1. Catalyzes the condensation of pantoate with beta-alanine in an ATP-dependent reaction via a pantoyl-adenylate intermediate. In Paenarthrobacter aurescens (strain TC1), this protein is Pantothenate synthetase.